The chain runs to 394 residues: Tubby-like F-box protein 2 (394 aa).

Positions serine 21–proline 44 are disordered. A compositionally biased stretch (polar residues) spans serine 26 to proline 44. The F-box domain maps to serine 46–glycine 101. Disordered regions lie at residues alanine 200–serine 225 and isoleucine 268–arginine 297.

Belongs to the TUB family. As to expression, ubiquitous.

This chain is Tubby-like F-box protein 2, found in Arabidopsis thaliana (Mouse-ear cress).